The chain runs to 393 residues: NAD(P)H-quinone oxidoreductase subunit H, chloroplastic (393 aa).

This sequence belongs to the complex I 49 kDa subunit family. NDH is composed of at least 16 different subunits, 5 of which are encoded in the nucleus.

It is found in the plastid. It localises to the chloroplast thylakoid membrane. It carries out the reaction a plastoquinone + NADH + (n+1) H(+)(in) = a plastoquinol + NAD(+) + n H(+)(out). The catalysed reaction is a plastoquinone + NADPH + (n+1) H(+)(in) = a plastoquinol + NADP(+) + n H(+)(out). NDH shuttles electrons from NAD(P)H:plastoquinone, via FMN and iron-sulfur (Fe-S) centers, to quinones in the photosynthetic chain and possibly in a chloroplast respiratory chain. The immediate electron acceptor for the enzyme in this species is believed to be plastoquinone. Couples the redox reaction to proton translocation, and thus conserves the redox energy in a proton gradient. The polypeptide is NAD(P)H-quinone oxidoreductase subunit H, chloroplastic (Piper cenocladum (Ant piper)).